The primary structure comprises 356 residues: UDP-N-acetylglucosamine--N-acetylmuramyl-(pentapeptide) pyrophosphoryl-undecaprenol N-acetylglucosamine transferase (356 aa).

Residues 12–14 (TGG), asparagine 124, arginine 163, serine 188, isoleucine 242, 261–266 (ALTVCE), and glutamine 287 contribute to the UDP-N-acetyl-alpha-D-glucosamine site.

The protein belongs to the glycosyltransferase 28 family. MurG subfamily.

The protein localises to the cell inner membrane. It carries out the reaction di-trans,octa-cis-undecaprenyl diphospho-N-acetyl-alpha-D-muramoyl-L-alanyl-D-glutamyl-meso-2,6-diaminopimeloyl-D-alanyl-D-alanine + UDP-N-acetyl-alpha-D-glucosamine = di-trans,octa-cis-undecaprenyl diphospho-[N-acetyl-alpha-D-glucosaminyl-(1-&gt;4)]-N-acetyl-alpha-D-muramoyl-L-alanyl-D-glutamyl-meso-2,6-diaminopimeloyl-D-alanyl-D-alanine + UDP + H(+). Its pathway is cell wall biogenesis; peptidoglycan biosynthesis. Cell wall formation. Catalyzes the transfer of a GlcNAc subunit on undecaprenyl-pyrophosphoryl-MurNAc-pentapeptide (lipid intermediate I) to form undecaprenyl-pyrophosphoryl-MurNAc-(pentapeptide)GlcNAc (lipid intermediate II). This Stutzerimonas stutzeri (strain A1501) (Pseudomonas stutzeri) protein is UDP-N-acetylglucosamine--N-acetylmuramyl-(pentapeptide) pyrophosphoryl-undecaprenol N-acetylglucosamine transferase.